The chain runs to 484 residues: uncharacterized protein (484 aa).

The N-acetyltransferase domain occupies 334–484; sequence IIIRQITDND…ENEWIYEVNL (151 aa).

This is an uncharacterized protein from Methanocaldococcus jannaschii (strain ATCC 43067 / DSM 2661 / JAL-1 / JCM 10045 / NBRC 100440) (Methanococcus jannaschii).